A 429-amino-acid polypeptide reads, in one-letter code: Ribosomal RNA small subunit methyltransferase B (429 aa).

Residues 254 to 260 (CAAPGGK), Asp277, Asp303, and Asp322 each bind S-adenosyl-L-methionine. The active-site Nucleophile is Cys375.

The protein belongs to the class I-like SAM-binding methyltransferase superfamily. RsmB/NOP family.

Its subcellular location is the cytoplasm. The enzyme catalyses cytidine(967) in 16S rRNA + S-adenosyl-L-methionine = 5-methylcytidine(967) in 16S rRNA + S-adenosyl-L-homocysteine + H(+). Specifically methylates the cytosine at position 967 (m5C967) of 16S rRNA. The chain is Ribosomal RNA small subunit methyltransferase B from Serratia proteamaculans (strain 568).